The sequence spans 334 residues: Heat-inducible transcription repressor HrcA (334 aa).

This sequence belongs to the HrcA family.

Negative regulator of class I heat shock genes (grpE-dnaK-dnaJ and groELS operons). Prevents heat-shock induction of these operons. The protein is Heat-inducible transcription repressor HrcA of Bordetella bronchiseptica (strain ATCC BAA-588 / NCTC 13252 / RB50) (Alcaligenes bronchisepticus).